A 272-amino-acid chain; its full sequence is Probable prolyl 4-hydroxylase 11 (272 aa).

The Cytoplasmic portion of the chain corresponds to 1-55 (MSKSTSVSTILYLRQRLQGLKIYETSDLIQHINTFDELVGEQVSVDVKIEEKTKD). A helical; Signal-anchor for type II membrane protein transmembrane segment spans residues 56–80 (MILLCSLSPLLTTLTCSMVKVAASL). The Lumenal portion of the chain corresponds to 81 to 272 (RFPNERWLEV…KRHCLSLNLF (192 aa)). In terms of domain architecture, Fe2OG dioxygenase spans 179 to 272 (NGETLQVINY…KRHCLSLNLF (94 aa)). Residues histidine 197, aspartate 199, and histidine 261 each coordinate Fe cation.

The protein belongs to the P4HA family. It depends on Fe(2+) as a cofactor. Requires L-ascorbate as cofactor.

The protein resides in the endoplasmic reticulum membrane. It catalyses the reaction L-prolyl-[collagen] + 2-oxoglutarate + O2 = trans-4-hydroxy-L-prolyl-[collagen] + succinate + CO2. Functionally, catalyzes the post-translational formation of 4-hydroxyproline in -Xaa-Pro-Gly- sequences in proline-rich peptide sequences of plant glycoproteins and other proteins. Hydroxyprolines are important constituent of many plant cell wall glycoproteins such as extensins, hydroxyproline-rich glycoproteins, lectins and arabinogalactan proteins. In Arabidopsis thaliana (Mouse-ear cress), this protein is Probable prolyl 4-hydroxylase 11.